A 351-amino-acid chain; its full sequence is MELIPVLEPEQKPQNRHWYVLEPTGAAPGVSVGHTCSFLPAAHHHDEDGGGKGKIVIVGGANPSGSFADSYIINLDTHQWDLPDWEGLQARYEHCSFTPESEPQSLWVFGGAEKSTNRNCVQALRFSDGGEGRRFWQSVQVTGVPPSGRTYHTNSACVGNRLFVFSGGEAGSSAVTDAQLHVFDAVSVTWTQPDTTGTPPAQRHGHVITAVGSDIYIHGGMSGEKFHSDMFTLNTESLKWQKVKAKGDLPPGVAAHSSVTFNKNIFIFGGMTADGATNSMFKFQCDKQRWTLLKFEGDLPPGRLDHSMCLLPWRVKMEDSEHADVQHLCFVFGGMDTQGVIFNDCLVTVLT.

Kelch repeat units follow at residues 54 to 102 (KIVI…PESE), 105 to 156 (SLWV…TNSA), 162 to 210 (LFVF…VITA), 214 to 263 (DIYI…TFNK), 264 to 313 (NIFI…LLPW), and 328 to 351 (LCFV…TVLT).

Rab9 effector required for endosome to trans-Golgi network (TGN) transport. The polypeptide is Rab9 effector protein with kelch motifs (rabepk) (Danio rerio (Zebrafish)).